We begin with the raw amino-acid sequence, 84 residues long: Putative ribosomal RNA large subunit methyltransferase H 2 (84 aa).

S-adenosyl-L-methionine-binding positions include G33 and 52-57; that span reads FSKMTF.

This sequence belongs to the RNA methyltransferase RlmH family. In terms of assembly, homodimer.

It localises to the cytoplasm. The catalysed reaction is pseudouridine(1915) in 23S rRNA + S-adenosyl-L-methionine = N(3)-methylpseudouridine(1915) in 23S rRNA + S-adenosyl-L-homocysteine + H(+). Its function is as follows. Specifically methylates the pseudouridine at position 1915 (m3Psi1915) in 23S rRNA. The polypeptide is Putative ribosomal RNA large subunit methyltransferase H 2 (rlmH2) (Clostridium perfringens (strain SM101 / Type A)).